A 497-amino-acid polypeptide reads, in one-letter code: Probable cytosol aminopeptidase (497 aa).

Lys-265 and Asp-270 together coordinate Mn(2+). Lys-277 is an active-site residue. Positions 288, 347, and 349 each coordinate Mn(2+). Arg-351 is an active-site residue.

Belongs to the peptidase M17 family. It depends on Mn(2+) as a cofactor.

The protein resides in the cytoplasm. It catalyses the reaction Release of an N-terminal amino acid, Xaa-|-Yaa-, in which Xaa is preferably Leu, but may be other amino acids including Pro although not Arg or Lys, and Yaa may be Pro. Amino acid amides and methyl esters are also readily hydrolyzed, but rates on arylamides are exceedingly low.. It carries out the reaction Release of an N-terminal amino acid, preferentially leucine, but not glutamic or aspartic acids.. Presumably involved in the processing and regular turnover of intracellular proteins. Catalyzes the removal of unsubstituted N-terminal amino acids from various peptides. The polypeptide is Probable cytosol aminopeptidase (Geobacillus sp. (strain WCH70)).